A 409-amino-acid chain; its full sequence is Broad specificity amino-acid racemase (409 aa).

Positions 1–25 (MRLKKTLLSIAIAAATFTPAMHSIA) are cleaved as a signal peptide. C72 and C98 are oxidised to a cystine. Residue K76 is the Proton acceptor of the active site. K76 is subject to N6-(pyridoxal phosphate)lysine. A substrate-binding site is contributed by R175. Y301 acts as the Proton acceptor in catalysis. M349 contributes to the substrate binding site.

This sequence belongs to the alanine racemase family. Bsr subfamily. Pyridoxal 5'-phosphate is required as a cofactor.

Its subcellular location is the periplasm. The catalysed reaction is an L-alpha-amino acid = a D-alpha-amino acid. It catalyses the reaction L-lysine = D-lysine. The enzyme catalyses L-arginine = D-arginine. In terms of biological role, amino-acid racemase able to utilize a broad range of substrates. The polypeptide is Broad specificity amino-acid racemase (Vibrio parahaemolyticus serotype O3:K6 (strain RIMD 2210633)).